A 363-amino-acid chain; its full sequence is UDP-N-acetylenolpyruvoylglucosamine reductase (363 aa).

The region spanning 27 to 197 (LGGWATRVVT…LSVDFRLARS (171 aa)) is the FAD-binding PCMH-type domain. The active site involves R175. The Proton donor role is filled by S252. E355 is an active-site residue.

It belongs to the MurB family. FAD is required as a cofactor.

Its subcellular location is the cytoplasm. The enzyme catalyses UDP-N-acetyl-alpha-D-muramate + NADP(+) = UDP-N-acetyl-3-O-(1-carboxyvinyl)-alpha-D-glucosamine + NADPH + H(+). Its pathway is cell wall biogenesis; peptidoglycan biosynthesis. Functionally, cell wall formation. This Salinispora arenicola (strain CNS-205) protein is UDP-N-acetylenolpyruvoylglucosamine reductase.